The primary structure comprises 207 residues: Thiamine-phosphate synthase (207 aa).

Residues 35 to 39 and Asn-67 each bind 4-amino-2-methyl-5-(diphosphooxymethyl)pyrimidine; that span reads QYRDK. Positions 68 and 86 each coordinate Mg(2+). Thr-105 is a 4-amino-2-methyl-5-(diphosphooxymethyl)pyrimidine binding site. 132–134 serves as a coordination point for 2-[(2R,5Z)-2-carboxy-4-methylthiazol-5(2H)-ylidene]ethyl phosphate; it reads SVT. Lys-135 contributes to the 4-amino-2-methyl-5-(diphosphooxymethyl)pyrimidine binding site. Gly-162 provides a ligand contact to 2-[(2R,5Z)-2-carboxy-4-methylthiazol-5(2H)-ylidene]ethyl phosphate.

Belongs to the thiamine-phosphate synthase family. Mg(2+) serves as cofactor.

The catalysed reaction is 2-[(2R,5Z)-2-carboxy-4-methylthiazol-5(2H)-ylidene]ethyl phosphate + 4-amino-2-methyl-5-(diphosphooxymethyl)pyrimidine + 2 H(+) = thiamine phosphate + CO2 + diphosphate. It catalyses the reaction 2-(2-carboxy-4-methylthiazol-5-yl)ethyl phosphate + 4-amino-2-methyl-5-(diphosphooxymethyl)pyrimidine + 2 H(+) = thiamine phosphate + CO2 + diphosphate. The enzyme catalyses 4-methyl-5-(2-phosphooxyethyl)-thiazole + 4-amino-2-methyl-5-(diphosphooxymethyl)pyrimidine + H(+) = thiamine phosphate + diphosphate. It participates in cofactor biosynthesis; thiamine diphosphate biosynthesis; thiamine phosphate from 4-amino-2-methyl-5-diphosphomethylpyrimidine and 4-methyl-5-(2-phosphoethyl)-thiazole: step 1/1. In terms of biological role, condenses 4-methyl-5-(beta-hydroxyethyl)thiazole monophosphate (THZ-P) and 2-methyl-4-amino-5-hydroxymethyl pyrimidine pyrophosphate (HMP-PP) to form thiamine monophosphate (TMP). The sequence is that of Thiamine-phosphate synthase from Pseudomonas putida (strain ATCC 47054 / DSM 6125 / CFBP 8728 / NCIMB 11950 / KT2440).